Here is a 479-residue protein sequence, read N- to C-terminus: Ribosomal RNA small subunit methyltransferase F (479 aa).

Residues 125-131, glutamate 149, aspartate 176, and aspartate 194 each bind S-adenosyl-L-methionine; that span reads AAAPGSK. The active-site Nucleophile is the cysteine 247.

It belongs to the class I-like SAM-binding methyltransferase superfamily. RsmB/NOP family.

It is found in the cytoplasm. The enzyme catalyses cytidine(1407) in 16S rRNA + S-adenosyl-L-methionine = 5-methylcytidine(1407) in 16S rRNA + S-adenosyl-L-homocysteine + H(+). Specifically methylates the cytosine at position 1407 (m5C1407) of 16S rRNA. The protein is Ribosomal RNA small subunit methyltransferase F of Escherichia coli O81 (strain ED1a).